The chain runs to 176 residues: Crossover junction endodeoxyribonuclease RuvC (176 aa).

Residues Asp12, Glu72, and Asp144 contribute to the active site. The Mg(2+) site is built by Asp12, Glu72, and Asp144.

The protein belongs to the RuvC family. As to quaternary structure, homodimer which binds Holliday junction (HJ) DNA. The HJ becomes 2-fold symmetrical on binding to RuvC with unstacked arms; it has a different conformation from HJ DNA in complex with RuvA. In the full resolvosome a probable DNA-RuvA(4)-RuvB(12)-RuvC(2) complex forms which resolves the HJ. Mg(2+) is required as a cofactor.

The protein resides in the cytoplasm. It catalyses the reaction Endonucleolytic cleavage at a junction such as a reciprocal single-stranded crossover between two homologous DNA duplexes (Holliday junction).. In terms of biological role, the RuvA-RuvB-RuvC complex processes Holliday junction (HJ) DNA during genetic recombination and DNA repair. Endonuclease that resolves HJ intermediates. Cleaves cruciform DNA by making single-stranded nicks across the HJ at symmetrical positions within the homologous arms, yielding a 5'-phosphate and a 3'-hydroxyl group; requires a central core of homology in the junction. The consensus cleavage sequence is 5'-(A/T)TT(C/G)-3'. Cleavage occurs on the 3'-side of the TT dinucleotide at the point of strand exchange. HJ branch migration catalyzed by RuvA-RuvB allows RuvC to scan DNA until it finds its consensus sequence, where it cleaves and resolves the cruciform DNA. This Methylocella silvestris (strain DSM 15510 / CIP 108128 / LMG 27833 / NCIMB 13906 / BL2) protein is Crossover junction endodeoxyribonuclease RuvC.